The chain runs to 232 residues: Small ribosomal subunit protein uS3 (232 aa).

The KH type-2 domain occupies 39–107 (IRKFLKKELF…DVAINIKEEK (69 aa)). Residues 213 to 232 (QPEPAEEKKGGRRPSRKRGE) form a disordered region. Residues 222–232 (GGRRPSRKRGE) show a composition bias toward basic residues.

This sequence belongs to the universal ribosomal protein uS3 family. As to quaternary structure, part of the 30S ribosomal subunit. Forms a tight complex with proteins S10 and S14.

In terms of biological role, binds the lower part of the 30S subunit head. Binds mRNA in the 70S ribosome, positioning it for translation. In Sulfurovum sp. (strain NBC37-1), this protein is Small ribosomal subunit protein uS3.